Consider the following 355-residue polypeptide: Peptide chain release factor 1 (355 aa).

At glutamine 232 the chain carries N5-methylglutamine. Positions 282–309 are disordered; sequence EQNASISAERKSQVGSGDRSERIRTYNY. Over residues 289 to 305 the composition is skewed to basic and acidic residues; it reads AERKSQVGSGDRSERIR.

The protein belongs to the prokaryotic/mitochondrial release factor family. Post-translationally, methylated by PrmC. Methylation increases the termination efficiency of RF1.

Its subcellular location is the cytoplasm. Its function is as follows. Peptide chain release factor 1 directs the termination of translation in response to the peptide chain termination codons UAG and UAA. The chain is Peptide chain release factor 1 from Desulfatibacillum aliphaticivorans.